Reading from the N-terminus, the 79-residue chain is Conotoxin MIVA (79 aa).

The first 21 residues, 1–21 (MGMRMMFTVFLLVVLATTVVS), serve as a signal peptide directing secretion. Residues 22–38 (IPSDRASDGRNAVVHER) constitute a propeptide that is removed on maturation. Pro40 is modified (4-hydroxyproline). Residue Glu41 is modified to 4-carboxyglutamate. Residues Thr45 and Thr47 are each glycosylated (O-linked (HexNAc...) threonine). Pro55, Pro60, Pro61, Pro69, Pro70, and Pro74 each carry 4-hydroxyproline. Proline amide is present on Pro74. Positions 75-79 (GRRND) are excised as a propeptide.

O-linked glycan consists of Hex4-HexNAc2 hexasaccharide. In terms of processing, contains 3 disulfide bonds. Expressed by the venom duct.

It localises to the secreted. Functionally, probable neurotoxin with ion channel inhibitor activity. The chain is Conotoxin MIVA from Conus magus (Magical cone).